A 1192-amino-acid polypeptide reads, in one-letter code: Protein pangolin, isoform J (1192 aa).

The Nuclear localization signal signature appears at 351–357 (LGLPSEE). The interval 691–713 (AKHTSNAQSNESKETTNDKKKPH) is disordered. The segment at residues 714-782 (IKKPLNAFML…LHMELYPGWS (69 aa)) is a DNA-binding region (HMG box). 4 disordered regions span residues 790-812 (VSKKKKRKKDRSTTDSGGNNMKK), 847-916 (PAED…SPST), 955-986 (QRPTLVSTSGSSSGSTSSISTTPNTSSTVSPV), and 1136-1192 (QLNN…ISVS). Acidic residues predominate over residues 862–871 (SDDDEDDYDD). 2 stretches are compositionally biased toward low complexity: residues 898–915 (SMPSPGCLSGLSSLQSPS) and 957–986 (PTLVSTSGSSSGSTSSISTTPNTSSTVSPV). Composition is skewed to polar residues over residues 1140–1162 (RTENPNRSEQTMLSVSNHSVNSS) and 1170–1192 (SQAIVSSNPPNAGSSDNGVISVS).

This sequence belongs to the TCF/LEF family. As to quaternary structure, binds to the beta-catenin homolog arm or to gro.

The protein localises to the nucleus. Its function is as follows. Segment polarity protein. Functions together with arm to transduce the Wingless (Wg) signal in embryos and in developing adult tissues. Acts as a transcriptional activator, but in the absence of arm, it binds to gro and acts as a transcriptional repressor of wg-responsive genes. This chain is Protein pangolin, isoform J, found in Drosophila melanogaster (Fruit fly).